The primary structure comprises 136 residues: Lymphocyte antigen 6E (136 aa).

Residues M1 to S26 form the signal peptide. The region spanning L27–P118 is the UPAR/Ly6 domain. Intrachain disulfides connect C29/C54, C32/C41, C47/C76, C80/C98, and C99/C104. A glycan (N-linked (GlcNAc...) asparagine) is linked at N105. A108 carries the GPI-anchor amidated alanine lipid modification. A propeptide spans A109–P136 (removed in mature form).

In terms of assembly, interacts with CHRNA4. Interacts with CD3Z/CD247. As to expression, ubiquitously expressed in mouse adult tissues with maximal expression in the lung and the salivary gland. Expression is strikingly lower in the fetal tissues except for the placenta. Present in thymus where its expression is observed in immature thymocytes and thymic stromal cells. Also found on functionally active T-cells as well as B-cells and thymic dendritic cells.

The protein resides in the cell membrane. Its function is as follows. GPI-anchored cell surface protein that regulates T-lymphocytes proliferation, differentiation, and activation. Regulates the T-cell receptor (TCR) signaling by interacting with component CD3Z/CD247 at the plasma membrane, leading to CD3Z/CD247 phosphorylation modulation. Restricts the entry of murine coronavirus, mouse hepatitis virus, by interfering with spike protein-mediated membrane fusion. Also plays an essential role in placenta formation by acting as the main receptor for syncytin-A (SynA). Therefore, participates in the normal fusion of syncytiotrophoblast layer I (SynT-I) and in the proper morphogenesis of both fetal and maternal vasculatures within the placenta. May also act as a modulator of nicotinic acetylcholine receptors (nAChRs) activity. In vitro inhibits alpha-3:beta-4-containing nAChRs maximum response. In Mus musculus (Mouse), this protein is Lymphocyte antigen 6E.